The sequence spans 198 residues: Holliday junction branch migration complex subunit RuvA (198 aa).

The interval 1–64 (MYEYIKGEYM…EDFIGLYGFE (64 aa)) is domain I. Residues 65–143 (SLEELDMFKL…SDELLNCIDE (79 aa)) are domain II. Residues 144 to 154 (FDDVTQDNSLA) form a flexible linker region. A domain III region spans residues 154 to 198 (ALSEALSALISLGYTEKEAEKVLKDVDKSESVENIIKSALVKLMG).

The protein belongs to the RuvA family. Homotetramer. Forms an RuvA(8)-RuvB(12)-Holliday junction (HJ) complex. HJ DNA is sandwiched between 2 RuvA tetramers; dsDNA enters through RuvA and exits via RuvB. An RuvB hexamer assembles on each DNA strand where it exits the tetramer. Each RuvB hexamer is contacted by two RuvA subunits (via domain III) on 2 adjacent RuvB subunits; this complex drives branch migration. In the full resolvosome a probable DNA-RuvA(4)-RuvB(12)-RuvC(2) complex forms which resolves the HJ.

It localises to the cytoplasm. Its function is as follows. The RuvA-RuvB-RuvC complex processes Holliday junction (HJ) DNA during genetic recombination and DNA repair, while the RuvA-RuvB complex plays an important role in the rescue of blocked DNA replication forks via replication fork reversal (RFR). RuvA specifically binds to HJ cruciform DNA, conferring on it an open structure. The RuvB hexamer acts as an ATP-dependent pump, pulling dsDNA into and through the RuvAB complex. HJ branch migration allows RuvC to scan DNA until it finds its consensus sequence, where it cleaves and resolves the cruciform DNA. This Clostridium botulinum (strain Alaska E43 / Type E3) protein is Holliday junction branch migration complex subunit RuvA.